We begin with the raw amino-acid sequence, 245 residues long: MNLMNATPTEYVWKYNPVSGIPAGAQQNYGATIDWVLPGGTGFAIATNDIRRQTLNPAVTRAITARFEAESDQQPYASPHETNVIAANVLDSGYPKSGLYPLELSGNQRVQLAGGLMVGRTEGRMQLAGGLTEGRVQLSGGFHGRPLVRGRSRRPPRWCGAELTGNGLPEQAEVTSDTYKYFLRTQGPSQVVEEPGVFSQRQFMTTFLPSVVPHPFDSTNPGDFPAQYSAIYKGRTAFEDTFWDW.

The propeptide occupies 116–167 (LMVGRTEGRMQLAGGLTEGRVQLSGGFHGRPLVRGRSRRPPRWCGAELTGNG).

The protein belongs to the adenoviridae hexon-linking protein family. In terms of assembly, interacts with the peripentonal hexons as well as the hexons in the facets. Part of a complex composed of the core-capsid bridging protein, the endosome lysis protein VI and the hexon-linking protein VIII; these interactions bridge the virus core to the capsid. In terms of processing, cleaved by the viral protease during virion maturation. May cause the middle segment to be shed from the capsid.

It is found in the virion. The protein resides in the host nucleus. Functionally, structural component of the virion that acts as a cement protein on the capsid interior and which glue the peripentonal hexons and group-of-nine hexons together. The sequence is that of Pre-hexon-linking protein VIII from Galliformes (FAdV-1).